The primary structure comprises 112 residues: UPF0102 protein THEYE_A1950 (112 aa).

It belongs to the UPF0102 family.

This is UPF0102 protein THEYE_A1950 from Thermodesulfovibrio yellowstonii (strain ATCC 51303 / DSM 11347 / YP87).